The sequence spans 128 residues: Mini-ribonuclease 3 (128 aa).

D17 is a catalytic residue.

This sequence belongs to the MrnC RNase family. In terms of assembly, homodimer. Requires Mg(2+) as cofactor.

Its subcellular location is the cytoplasm. Involved in correct processing of both the 5' and 3' ends of 23S rRNA precursor. Processes 30S rRNA precursor transcript even in absence of ribonuclease 3 (Rnc); Rnc processes 30S rRNA into smaller rRNA precursors. The sequence is that of Mini-ribonuclease 3 from Streptococcus pneumoniae (strain ATCC BAA-255 / R6).